The primary structure comprises 287 residues: Syntaxin-11 (287 aa).

Residues 41–71 (LESLYRDIRDIQDENQLLVADVKRLGKQNAR) are a coiled coil. Residues 204 to 266 (LNEIESRHRE…GQAKAQVRKA (63 aa)) enclose the t-SNARE coiled-coil homology domain.

The protein belongs to the syntaxin family. Interacts with the SNARE proteins SNAP-23 and VAMP.

It is found in the membrane. Its subcellular location is the golgi apparatus. It localises to the trans-Golgi network membrane. SNARE that acts to regulate protein transport between late endosomes and the trans-Golgi network. The polypeptide is Syntaxin-11 (STX11) (Homo sapiens (Human)).